Reading from the N-terminus, the 375-residue chain is GDP-mannose-dependent alpha-mannosyltransferase (375 aa).

This sequence belongs to the glycosyltransferase group 1 family. Glycosyltransferase 4 subfamily.

Its pathway is phospholipid metabolism; phosphatidylinositol metabolism. Its function is as follows. Catalyzes the addition of a mannose residue from GDP-D-mannose to GlcAGroAc2 to generate 1,2-di-O-C16/C18:1-(alpha-D-mannopyranosyl)-(1-4)-(alpha-D-glucopyranosyluronic acid)-(1-3)-glycerol(ManGlcAGroAc2). This is GDP-mannose-dependent alpha-mannosyltransferase (mgtA) from Mycolicibacterium smegmatis (strain ATCC 700084 / mc(2)155) (Mycobacterium smegmatis).